A 150-amino-acid chain; its full sequence is MSTVKRILLINGPNLNLLGLREPGHYGHHTLAQLVADLTVKATNLSVTLDHIQSNAEHELIDAIHQAHGNVDFIIINPAAFTHTSVAIRDALLGVAIPFIEVHLSNVHAREPFRHHSYLSDKAVGVICGLGPDGYEFALNAAVRRLQSES.

Tyr-26 functions as the Proton acceptor in the catalytic mechanism. Positions 77, 83, and 90 each coordinate substrate. His-103 acts as the Proton donor in catalysis. Substrate is bound by residues 104–105 (LS) and Arg-114.

The protein belongs to the type-II 3-dehydroquinase family. In terms of assembly, homododecamer.

It carries out the reaction 3-dehydroquinate = 3-dehydroshikimate + H2O. It participates in metabolic intermediate biosynthesis; chorismate biosynthesis; chorismate from D-erythrose 4-phosphate and phosphoenolpyruvate: step 3/7. Catalyzes a trans-dehydration via an enolate intermediate. The protein is 3-dehydroquinate dehydratase of Photobacterium profundum (strain SS9).